A 626-amino-acid polypeptide reads, in one-letter code: uncharacterized protein (626 aa).

Residues 103-123 traverse the membrane as a helical segment; sequence AGALLVKFFPLLLLYPLTYLA. A Protein kinase domain is found at 200–618; that stretch reads FENREPVGSG…DILEAARPFL (419 aa). Residues 206-214 and K311 contribute to the ATP site; that span reads VGSGCVAQV. The active-site Proton acceptor is D445.

This sequence belongs to the protein kinase superfamily. ADCK protein kinase family.

It is found in the mitochondrion. The protein localises to the membrane. Its function is as follows. The function of this protein is not yet clear. It is not known if it has protein kinase activity and what type of substrate it would phosphorylate (Ser, Thr or Tyr). Involved in the mitochondrial import of CoQ precursors, plays a role in muscle mitochondrial function and fatty acid beta-oxidation. This is an uncharacterized protein from Homo sapiens (Human).